We begin with the raw amino-acid sequence, 447 residues long: tRNA modification GTPase MnmE (447 aa).

Residues arginine 24, glutamate 81, and lysine 120 each coordinate (6S)-5-formyl-5,6,7,8-tetrahydrofolate. The TrmE-type G domain occupies 216–371; it reads GLNVAIAGKP…LRKELSNISG (156 aa). Asparagine 226 contacts K(+). Residues 226–231, 245–251, and 270–273 contribute to the GTP site; these read NAGKSS, TDIAGTT, and DTAG. Residue serine 230 coordinates Mg(2+). Residues threonine 245, isoleucine 247, and threonine 250 each contribute to the K(+) site. Mg(2+) is bound at residue threonine 251. (6S)-5-formyl-5,6,7,8-tetrahydrofolate is bound at residue lysine 447.

It belongs to the TRAFAC class TrmE-Era-EngA-EngB-Septin-like GTPase superfamily. TrmE GTPase family. In terms of assembly, homodimer. Heterotetramer of two MnmE and two MnmG subunits. It depends on K(+) as a cofactor.

The protein localises to the cytoplasm. Exhibits a very high intrinsic GTPase hydrolysis rate. Involved in the addition of a carboxymethylaminomethyl (cmnm) group at the wobble position (U34) of certain tRNAs, forming tRNA-cmnm(5)s(2)U34. This is tRNA modification GTPase MnmE from Vesicomyosocius okutanii subsp. Calyptogena okutanii (strain HA).